A 129-amino-acid chain; its full sequence is Phosphoribosyl-AMP cyclohydrolase (129 aa).

Residue Asp-94 participates in Mg(2+) binding. Cys-95 is a binding site for Zn(2+). The Mg(2+) site is built by Asp-96 and Asp-98. Zn(2+)-binding residues include Cys-111 and Cys-118.

It belongs to the PRA-CH family. As to quaternary structure, homodimer. Mg(2+) is required as a cofactor. The cofactor is Zn(2+).

The protein resides in the cytoplasm. The enzyme catalyses 1-(5-phospho-beta-D-ribosyl)-5'-AMP + H2O = 1-(5-phospho-beta-D-ribosyl)-5-[(5-phospho-beta-D-ribosylamino)methylideneamino]imidazole-4-carboxamide. Its pathway is amino-acid biosynthesis; L-histidine biosynthesis; L-histidine from 5-phospho-alpha-D-ribose 1-diphosphate: step 3/9. Its function is as follows. Catalyzes the hydrolysis of the adenine ring of phosphoribosyl-AMP. This Corynebacterium efficiens (strain DSM 44549 / YS-314 / AJ 12310 / JCM 11189 / NBRC 100395) protein is Phosphoribosyl-AMP cyclohydrolase.